Consider the following 218-residue polypeptide: 3-dehydroquinate dehydratase (218 aa).

Residues 29–31 and Arg-56 contribute to the 3-dehydroquinate site; that span reads EFR. His-116 functions as the Proton donor/acceptor in the catalytic mechanism. Lys-142 (schiff-base intermediate with substrate) is an active-site residue. Positions 180, 200, and 204 each coordinate 3-dehydroquinate.

Belongs to the type-I 3-dehydroquinase family. Homodimer.

The catalysed reaction is 3-dehydroquinate = 3-dehydroshikimate + H2O. It participates in metabolic intermediate biosynthesis; chorismate biosynthesis; chorismate from D-erythrose 4-phosphate and phosphoenolpyruvate: step 3/7. Its function is as follows. Involved in the third step of the chorismate pathway, which leads to the biosynthesis of aromatic amino acids. Catalyzes the cis-dehydration of 3-dehydroquinate (DHQ) and introduces the first double bond of the aromatic ring to yield 3-dehydroshikimate. The protein is 3-dehydroquinate dehydratase of Methanococcus maripaludis (strain C5 / ATCC BAA-1333).